The sequence spans 397 residues: Elongation factor Tu (397 aa).

The tr-type G domain occupies 10 to 207 (LPHCNVGTIG…TLDSYIPQPE (198 aa)). A G1 region spans residues 19–26 (GHVDHGKT). Residue 19–26 (GHVDHGKT) participates in GTP binding. Threonine 26 contributes to the Mg(2+) binding site. Positions 60-64 (GITIN) are G2. The G3 stretch occupies residues 81–84 (DCPG). Residues 81–85 (DCPGH) and 136–139 (NKAD) each bind GTP. The interval 136 to 139 (NKAD) is G4. The interval 174–176 (SAR) is G5.

The protein belongs to the TRAFAC class translation factor GTPase superfamily. Classic translation factor GTPase family. EF-Tu/EF-1A subfamily. In terms of assembly, monomer.

It localises to the cytoplasm. It catalyses the reaction GTP + H2O = GDP + phosphate + H(+). Its function is as follows. GTP hydrolase that promotes the GTP-dependent binding of aminoacyl-tRNA to the A-site of ribosomes during protein biosynthesis. This is Elongation factor Tu from Pseudomonas syringae pv. tomato (strain ATCC BAA-871 / DC3000).